The following is a 38-amino-acid chain: MEALVYTFLLVSTLGIIFFAIFFREPPKVPPTPTKRIK.

A helical transmembrane segment spans residues 3-23 (ALVYTFLLVSTLGIIFFAIFF).

It belongs to the PsbT family. PSII is composed of 1 copy each of membrane proteins PsbA, PsbB, PsbC, PsbD, PsbE, PsbF, PsbH, PsbI, PsbJ, PsbK, PsbL, PsbM, PsbT, PsbY, PsbZ, Psb30/Ycf12, at least 3 peripheral proteins of the oxygen-evolving complex and a large number of cofactors. It forms dimeric complexes.

It is found in the plastid. Its subcellular location is the chloroplast thylakoid membrane. Its function is as follows. Found at the monomer-monomer interface of the photosystem II (PS II) dimer, plays a role in assembly and dimerization of PSII. PSII is a light-driven water plastoquinone oxidoreductase, using light energy to abstract electrons from H(2)O, generating a proton gradient subsequently used for ATP formation. The protein is Photosystem II reaction center protein T of Secale cereale (Rye).